A 205-amino-acid chain; its full sequence is Adenylyl-sulfate kinase (205 aa).

31 to 38 (GLSGSGKS) is an ATP binding site. Ser105 (phosphoserine intermediate) is an active-site residue.

This sequence belongs to the APS kinase family.

It carries out the reaction adenosine 5'-phosphosulfate + ATP = 3'-phosphoadenylyl sulfate + ADP + H(+). The protein operates within sulfur metabolism; hydrogen sulfide biosynthesis; sulfite from sulfate: step 2/3. Its function is as follows. Catalyzes the synthesis of activated sulfate. This is Adenylyl-sulfate kinase from Shewanella pealeana (strain ATCC 700345 / ANG-SQ1).